We begin with the raw amino-acid sequence, 156 residues long: 6,7-dimethyl-8-ribityllumazine synthase (156 aa).

5-amino-6-(D-ribitylamino)uracil-binding positions include Phe-23, 57–59 (AYE), and 81–83 (AII). 86-87 (GT) serves as a coordination point for (2S)-2-hydroxy-3-oxobutyl phosphate. The Proton donor role is filled by His-89. Phe-114 lines the 5-amino-6-(D-ribitylamino)uracil pocket. A (2S)-2-hydroxy-3-oxobutyl phosphate-binding site is contributed by Arg-128.

Belongs to the DMRL synthase family.

It catalyses the reaction (2S)-2-hydroxy-3-oxobutyl phosphate + 5-amino-6-(D-ribitylamino)uracil = 6,7-dimethyl-8-(1-D-ribityl)lumazine + phosphate + 2 H2O + H(+). It participates in cofactor biosynthesis; riboflavin biosynthesis; riboflavin from 2-hydroxy-3-oxobutyl phosphate and 5-amino-6-(D-ribitylamino)uracil: step 1/2. Its function is as follows. Catalyzes the formation of 6,7-dimethyl-8-ribityllumazine by condensation of 5-amino-6-(D-ribitylamino)uracil with 3,4-dihydroxy-2-butanone 4-phosphate. This is the penultimate step in the biosynthesis of riboflavin. This Helicobacter pylori (strain HPAG1) protein is 6,7-dimethyl-8-ribityllumazine synthase.